The following is a 352-amino-acid chain: Uroporphyrinogen decarboxylase (352 aa).

Substrate is bound by residues 26–30 (RQAGR), Asp76, Tyr153, Ser208, and His323.

It belongs to the uroporphyrinogen decarboxylase family. Homodimer.

It is found in the cytoplasm. The enzyme catalyses uroporphyrinogen III + 4 H(+) = coproporphyrinogen III + 4 CO2. It participates in porphyrin-containing compound metabolism; protoporphyrin-IX biosynthesis; coproporphyrinogen-III from 5-aminolevulinate: step 4/4. Functionally, catalyzes the decarboxylation of four acetate groups of uroporphyrinogen-III to yield coproporphyrinogen-III. The protein is Uroporphyrinogen decarboxylase of Synechococcus sp. (strain CC9605).